An 858-amino-acid polypeptide reads, in one-letter code: Potassium channel KOR1 (858 aa).

Residues 1–41 (MGRGIGSKRRVEDDDGENMPGRKKKEEEEEEEDDDGEEEYE) are disordered. Residues 1–102 (MGRGIGSKRR…PDNKWYRLWT (102 aa)) lie on the Cytoplasmic side of the membrane. A compositionally biased stretch (acidic residues) spans 27-41 (EEEEEEDDDGEEEYE). Residues 103-123 (RFILVWAVYSSFFTPLEFGFF) form a helical membrane-spanning segment. Over 124–130 (RGLPRNL) the chain is Extracellular. The chain crosses the membrane as a helical span at residues 131–151 (FFLDIAGQIAFLIDIVLRFFV). The Cytoplasmic portion of the chain corresponds to 152-174 (AYRDPDTYRMVHNPTSIALRYCK). The helical transmembrane segment at 175 to 195 (SSFIFDLLGCFPWDAIYKACG) threads the bilayer. Over 196–201 (SKEEVR) the chain is Extracellular. A helical; Voltage-sensor transmembrane segment spans residues 202–222 (YLLWIRLTRAMKVTEFFRSME). At 223 to 236 (KDIRINYLFTRIVK) the chain is on the cytoplasmic side. The helical transmembrane segment at 237–257 (LIVVELYCTHTAACIFYYLAT) threads the bilayer. Residues 258-292 (TLPESMEGYTWIGSLQLGDYSYSHFREIDLTKRYM) are Extracellular-facing. Positions 293 to 312 (TSLYFAIVTMATVGYGDIHA) form an intramembrane region, pore-forming. At 313–316 (VNVR) the chain is on the extracellular side. A helical membrane pass occupies residues 317–337 (EMIFIMIYVSFDMILGAYLIG). The Cytoplasmic segment spans residues 338 to 858 (NMTALIVKGS…GDDGGTEARQ (521 aa)). 419 to 539 (LFKGCSAEFI…RRILSNLSES (121 aa)) serves as a coordination point for a nucleoside 3',5'-cyclic phosphate. ANK repeat units lie at residues 559–592 (KQEA…DPKN), 596–625 (DGRS…DIDL), 629–658 (FGNT…KLSL), 660–689 (NAGS…DPNA), 693–722 (DHRA…SVFA), and 726–756 (WGTT…ELSR). The KHA domain occupies 772 to 858 (RCSVFPHHPW…GDDGGTEARQ (87 aa)).

The protein belongs to the potassium channel family. Plant (TC 1.A.1.4) subfamily.

The protein resides in the membrane. Probable outward-rectifying potassium channel. The chain is Potassium channel KOR1 from Oryza sativa subsp. japonica (Rice).